The sequence spans 960 residues: Leucine--tRNA ligase (960 aa).

Residues 71–82 (PYPSGAGLHVGH) carry the 'HIGH' region motif. The 'KMSKS' region signature appears at 729-733 (KMGKS). Lys732 serves as a coordination point for ATP.

It belongs to the class-I aminoacyl-tRNA synthetase family.

It localises to the cytoplasm. It carries out the reaction tRNA(Leu) + L-leucine + ATP = L-leucyl-tRNA(Leu) + AMP + diphosphate. The protein is Leucine--tRNA ligase of Corynebacterium diphtheriae (strain ATCC 700971 / NCTC 13129 / Biotype gravis).